The primary structure comprises 151 residues: Small ribosomal subunit protein uS11 (151 aa).

The tract at residues 131–151 (DVTPVPSDSTRRKGGRRGRRL) is disordered. A compositionally biased stretch (basic residues) spans 142-151 (RKGGRRGRRL).

The protein belongs to the universal ribosomal protein uS11 family.

This chain is Small ribosomal subunit protein uS11, found in Bombyx mori (Silk moth).